Here is a 159-residue protein sequence, read N- to C-terminus: Transcriptional repressor NrdR (159 aa).

A zinc finger lies at 3–34 (CPFCRHDDTQVVDSRVSEDGAAIRRRRRCSAC). Positions 49–139 (PAVVKKDGSR…VYRRFEDVSE (91 aa)) constitute an ATP-cone domain.

This sequence belongs to the NrdR family. Requires Zn(2+) as cofactor.

Negatively regulates transcription of bacterial ribonucleotide reductase nrd genes and operons by binding to NrdR-boxes. This Burkholderia pseudomallei (strain 1106a) protein is Transcriptional repressor NrdR.